Here is a 471-residue protein sequence, read N- to C-terminus: Paraneoplastic antigen-like protein 8A (471 aa).

Disordered regions lie at residues 188 to 300 (SAAG…EGSA) and 321 to 471 (ASRG…PSAV). Over residues 238-247 (HSRRKRQKKT) the composition is skewed to basic residues. Positions 256 to 269 (KKSQGSHSHSSASL) are enriched in low complexity. Positions 270 to 287 (KHPEADDGKNRERLEHVR) are enriched in basic and acidic residues.

It belongs to the PNMA family.

The polypeptide is Paraneoplastic antigen-like protein 8A (PNMA8A) (Bos taurus (Bovine)).